The chain runs to 474 residues: tRNA-2-methylthio-N(6)-dimethylallyladenosine synthase (474 aa).

Residues Lys-3–Gly-120 form the MTTase N-terminal domain. 6 residues coordinate [4Fe-4S] cluster: Cys-12, Cys-49, Cys-83, Cys-157, Cys-161, and Cys-164. In terms of domain architecture, Radical SAM core spans Arg-143–Ala-375. The TRAM domain occupies Arg-378–Arg-441.

Belongs to the methylthiotransferase family. MiaB subfamily. As to quaternary structure, monomer. Requires [4Fe-4S] cluster as cofactor.

Its subcellular location is the cytoplasm. The catalysed reaction is N(6)-dimethylallyladenosine(37) in tRNA + (sulfur carrier)-SH + AH2 + 2 S-adenosyl-L-methionine = 2-methylsulfanyl-N(6)-dimethylallyladenosine(37) in tRNA + (sulfur carrier)-H + 5'-deoxyadenosine + L-methionine + A + S-adenosyl-L-homocysteine + 2 H(+). Its function is as follows. Catalyzes the methylthiolation of N6-(dimethylallyl)adenosine (i(6)A), leading to the formation of 2-methylthio-N6-(dimethylallyl)adenosine (ms(2)i(6)A) at position 37 in tRNAs that read codons beginning with uridine. The sequence is that of tRNA-2-methylthio-N(6)-dimethylallyladenosine synthase from Salmonella arizonae (strain ATCC BAA-731 / CDC346-86 / RSK2980).